The chain runs to 362 residues: 3-dehydroquinate synthase (362 aa).

NAD(+) contacts are provided by residues 71 to 76 (DGEQYK), 105 to 109 (GVVGD), 129 to 130 (TT), Lys-142, Lys-151, and 169 to 172 (CLKT). Positions 184, 247, and 264 each coordinate Zn(2+).

Belongs to the sugar phosphate cyclases superfamily. Dehydroquinate synthase family. NAD(+) is required as a cofactor. It depends on Co(2+) as a cofactor. The cofactor is Zn(2+).

The protein localises to the cytoplasm. The catalysed reaction is 7-phospho-2-dehydro-3-deoxy-D-arabino-heptonate = 3-dehydroquinate + phosphate. It functions in the pathway metabolic intermediate biosynthesis; chorismate biosynthesis; chorismate from D-erythrose 4-phosphate and phosphoenolpyruvate: step 2/7. In terms of biological role, catalyzes the conversion of 3-deoxy-D-arabino-heptulosonate 7-phosphate (DAHP) to dehydroquinate (DHQ). In Escherichia coli O157:H7, this protein is 3-dehydroquinate synthase.